Here is a 189-residue protein sequence, read N- to C-terminus: Group XIIA secretory phospholipase A2 (189 aa).

A signal peptide spans 1–22; sequence MALLSRPALTLLLLLMAAVVRC. G88, P90, and F92 together coordinate Ca(2+). Residue H110 is part of the active site. D111 lines the Ca(2+) pocket. D125 is a catalytic residue.

Ca(2+) is required as a cofactor. Abundantly expressed in heart, skeletal muscle, kidney, liver and pancreas.

It is found in the secreted. The protein resides in the cytoplasm. The enzyme catalyses a 1,2-diacyl-sn-glycero-3-phosphocholine + H2O = a 1-acyl-sn-glycero-3-phosphocholine + a fatty acid + H(+). In terms of biological role, PA2 catalyzes the calcium-dependent hydrolysis of the 2-acyl groups in 3-sn-phosphoglycerides. Does not exhibit detectable activity toward sn-2-arachidonoyl- or linoleoyl-phosphatidylcholine or -phosphatidylethanolamine. In Homo sapiens (Human), this protein is Group XIIA secretory phospholipase A2 (PLA2G12A).